The primary structure comprises 484 residues: Nuclear rim protein 1 (484 aa).

Ser3 is subject to Phosphoserine. 2 helical membrane passes run Phe145–Tyr165 and Thr252–Phe272. The interval Ser416–Ser458 is disordered. Ser417 is subject to Phosphoserine. The segment covering Asn430–Leu440 has biased composition (polar residues). The residue at position 474 (Ser474) is a Phosphoserine.

Belongs to the NUR1 family. As to quaternary structure, interacts with CSM1.

The protein localises to the nucleus membrane. Member of a perinuclear network that controls recombination at multiple loci to maintain genome stability. Required for rDNA repeat stability. The sequence is that of Nuclear rim protein 1 (NUR1) from Saccharomyces cerevisiae (strain YJM789) (Baker's yeast).